Consider the following 588-residue polypeptide: Adenylate kinase 5, chloroplastic (588 aa).

Positions 1 to 34 (MASLSLSSAHFSSTSSSSRSSISTSSLSPSSTSL) are disordered. Residues 1–73 (MASLSLSSAH…SFSTSNSQIR (73 aa)) constitute a chloroplast transit peptide. 89–94 (ASGKGT) provides a ligand contact to ATP. An NMP region spans residues 109–138 (STGDLLRAEVSSGTDIGKRAKEFMNSGSLV). AMP is bound by residues Arg-115, 136–138 (SLV), 165–168 (GFPR), and Gln-172. The tract at residues 202–235 (GRRLDPVTGKIYHIKNYPPESDEIKARLVTRPDD) is LID. Arg-203 is a binding site for ATP. Residues Arg-232 and Arg-243 each contribute to the AMP site.

It belongs to the adenylate kinase family. Monomer.

The protein localises to the plastid. Its subcellular location is the chloroplast. It catalyses the reaction AMP + ATP = 2 ADP. Its function is as follows. Catalyzes the reversible transfer of the terminal phosphate group between ATP and AMP. In Arabidopsis thaliana (Mouse-ear cress), this protein is Adenylate kinase 5, chloroplastic.